Here is a 256-residue protein sequence, read N- to C-terminus: Pimeloyl-[acyl-carrier protein] methyl ester esterase (256 aa).

The 225-residue stretch at 16-240 (LVILHGWGVN…PKASHAPFLS (225 aa)) folds into the AB hydrolase-1 domain. Substrate is bound by residues W22, 80–81 (SL), and 143–147 (FLAIQ). S80 functions as the Nucleophile in the catalytic mechanism. Active-site residues include D207 and H235. Substrate is bound at residue H235.

This sequence belongs to the AB hydrolase superfamily. Carboxylesterase BioH family. As to quaternary structure, monomer.

It is found in the cytoplasm. It carries out the reaction 6-carboxyhexanoyl-[ACP] methyl ester + H2O = 6-carboxyhexanoyl-[ACP] + methanol + H(+). It participates in cofactor biosynthesis; biotin biosynthesis. In terms of biological role, the physiological role of BioH is to remove the methyl group introduced by BioC when the pimeloyl moiety is complete. It allows to synthesize pimeloyl-ACP via the fatty acid synthetic pathway through the hydrolysis of the ester bonds of pimeloyl-ACP esters. The protein is Pimeloyl-[acyl-carrier protein] methyl ester esterase of Shewanella woodyi (strain ATCC 51908 / MS32).